A 320-amino-acid polypeptide reads, in one-letter code: MADNEFDIDAFFASHGEVSSPENQHCGFIAIVGRPNVGKSTLLNKILGQKISITSRKPQTTRHRIMGVDTDGDYQAIYVDTPGLHIEEKRAINRLMNRAANSSLSDVNLVFFLVDGTHWTKDDEMVLTKLQKSNFPVVLCVNKVDNVQDRNEVMLHMAEMSKKMDFVDVVPISAKQGKNIDVLRKHVRNHLPKATHHFPEEYVTDRSQRFMASEIVREKLMRFTGDELPYSVTVEIERFDYNPETDGFHINALILVERNGQKKMVIGKGGEKIKTIGREARLDMEELFGRKVYLETWVKVKSGWADDERALRSLGYIDDL.

One can recognise an Era-type G domain in the interval 25–193 (HCGFIAIVGR…RKHVRNHLPK (169 aa)). Residues 33–40 (GRPNVGKS) form a G1 region. 33-40 (GRPNVGKS) lines the GTP pocket. Positions 59-63 (QTTRH) are G2. Residues 80–83 (DTPG) are G3. GTP is bound by residues 80 to 84 (DTPGL) and 142 to 145 (NKVD). Residues 142-145 (NKVD) form a G4 region. A G5 region spans residues 172–174 (ISA). Positions 216 to 302 (VREKLMRFTG…YLETWVKVKS (87 aa)) constitute a KH type-2 domain.

The protein belongs to the TRAFAC class TrmE-Era-EngA-EngB-Septin-like GTPase superfamily. Era GTPase family. Monomer.

The protein localises to the cytoplasm. It localises to the cell inner membrane. An essential GTPase that binds both GDP and GTP, with rapid nucleotide exchange. Plays a role in 16S rRNA processing and 30S ribosomal subunit biogenesis and possibly also in cell cycle regulation and energy metabolism. The chain is GTPase Era from Vibrio parahaemolyticus serotype O3:K6 (strain RIMD 2210633).